The primary structure comprises 328 residues: Sulfate adenylyltransferase subunit 2 (328 aa).

Disordered stretches follow at residues alanine 15–histidine 34 and serine 304–phenylalanine 328.

It belongs to the PAPS reductase family. CysD subfamily. Heterodimer composed of CysD, the smaller subunit, and CysN.

It catalyses the reaction sulfate + ATP + H(+) = adenosine 5'-phosphosulfate + diphosphate. Its pathway is sulfur metabolism; hydrogen sulfide biosynthesis; sulfite from sulfate: step 1/3. Functionally, with CysN forms the ATP sulfurylase (ATPS) that catalyzes the adenylation of sulfate producing adenosine 5'-phosphosulfate (APS) and diphosphate, the first enzymatic step in sulfur assimilation pathway. APS synthesis involves the formation of a high-energy phosphoric-sulfuric acid anhydride bond driven by GTP hydrolysis by CysN coupled to ATP hydrolysis by CysD. The chain is Sulfate adenylyltransferase subunit 2 from Rhodopseudomonas palustris (strain BisA53).